The following is a 175-amino-acid chain: Bifunctional protein PyrR (175 aa).

Substrate contacts are provided by residues 40–41 (TR), 102–110 (DDVLYTGRT), arginine 135, and valine 159. The short motif at 98 to 110 (VVIIDDVLYTGRT) is the PRPP-binding element.

Belongs to the purine/pyrimidine phosphoribosyltransferase family. PyrR subfamily. In terms of assembly, homodimer and homohexamer; in equilibrium.

It catalyses the reaction UMP + diphosphate = 5-phospho-alpha-D-ribose 1-diphosphate + uracil. In terms of biological role, regulates transcriptional attenuation of the pyrimidine nucleotide (pyr) operon by binding in a uridine-dependent manner to specific sites on pyr mRNA. This disrupts an antiterminator hairpin in the RNA and favors formation of a downstream transcription terminator, leading to a reduced expression of downstream genes. Its function is as follows. Also displays a weak uracil phosphoribosyltransferase activity which is not physiologically significant. This is Bifunctional protein PyrR from Staphylococcus epidermidis (strain ATCC 12228 / FDA PCI 1200).